The following is a 239-amino-acid chain: tRNA (guanine-N(7)-)-methyltransferase (239 aa).

E69, E94, D121, and D144 together coordinate S-adenosyl-L-methionine. The active site involves D144. Substrate is bound at residue K148. Positions 150 to 155 are interaction with RNA; the sequence is RHNKRR. Substrate is bound by residues D180 and 217 to 220; that span reads TKFE.

It belongs to the class I-like SAM-binding methyltransferase superfamily. TrmB family. As to quaternary structure, monomer.

The catalysed reaction is guanosine(46) in tRNA + S-adenosyl-L-methionine = N(7)-methylguanosine(46) in tRNA + S-adenosyl-L-homocysteine. It functions in the pathway tRNA modification; N(7)-methylguanine-tRNA biosynthesis. Catalyzes the formation of N(7)-methylguanine at position 46 (m7G46) in tRNA. The chain is tRNA (guanine-N(7)-)-methyltransferase from Yersinia enterocolitica serotype O:8 / biotype 1B (strain NCTC 13174 / 8081).